We begin with the raw amino-acid sequence, 175 residues long: NADH-ubiquinone oxidoreductase chain 6 (175 aa).

A run of 5 helical transmembrane segments spans residues 1 to 21 (MMTYIVFILSIIFVVSFVGFS), 25 to 45 (SPIYGGLVLIISGAVGCGIVL), 47 to 67 (FGGSFLGLMVFLIYLGGMLVV), 88 to 108 (AVLGAFVMGLLSELLLACYIL), and 149 to 169 (YGTWLVIVTGWSLLTGVLVIM).

Belongs to the complex I subunit 6 family. Core subunit of respiratory chain NADH dehydrogenase (Complex I) which is composed of 45 different subunits.

The protein resides in the mitochondrion inner membrane. It carries out the reaction a ubiquinone + NADH + 5 H(+)(in) = a ubiquinol + NAD(+) + 4 H(+)(out). Its function is as follows. Core subunit of the mitochondrial membrane respiratory chain NADH dehydrogenase (Complex I) which catalyzes electron transfer from NADH through the respiratory chain, using ubiquinone as an electron acceptor. Essential for the catalytic activity and assembly of complex I. The protein is NADH-ubiquinone oxidoreductase chain 6 (MT-ND6) of Phoca vitulina (Harbor seal).